The following is a 65-amino-acid chain: Large ribosomal subunit protein uL29 (65 aa).

Belongs to the universal ribosomal protein uL29 family.

In Desulforamulus reducens (strain ATCC BAA-1160 / DSM 100696 / MI-1) (Desulfotomaculum reducens), this protein is Large ribosomal subunit protein uL29.